The sequence spans 302 residues: MEPGSTPPNGSAPATPGTPAPLFSSGGPRVDSLSYERKSMPRCKCLPLPAVEGWGVATHTCVVEIPAPDVSLTRKLGAEFVGTFILIFFATAAPIVNQKYGGAISPFGNAACAGLAVATVILSTGHISGAHLNPSLTIAFAALRHFPWLQVPAYVAVQALASVCAAFALKGVFHPFLSGGVTVPDATVSTAQAFFTEFIISFNLLFVVTAVATDTRAVGELAGIAVGAAVTLNILVAGPTTGGSMNPVRTLGPAVAAGNYRQLWIYLLAPTLGALAGASVYKAVKLRDENGETPRTQRSFRR.

The segment at 1–31 (MEPGSTPPNGSAPATPGTPAPLFSSGGPRVD) is disordered. Residues 7-21 (PPNGSAPATPGTPAP) show a composition bias toward low complexity. Transmembrane regions (helical) follow at residues 76 to 96 (LGAEFVGTFILIFFATAAPIV) and 102 to 122 (GAISPFGNAACAGLAVATVIL). The short motif at 133–135 (NPS) is the NPA 1 element. 3 helical membrane passes run 149-169 (LQVPAYVAVQALASVCAAFAL), 193-213 (AFFTEFIISFNLLFVVTAVAT), and 217-237 (AVGELAGIAVGAAVTLNILVA). The NPA 2 signature appears at 246–248 (NPV). A helical membrane pass occupies residues 264 to 284 (WIYLLAPTLGALAGASVYKAV).

Belongs to the MIP/aquaporin (TC 1.A.8) family. NIP (TC 1.A.8.12) subfamily.

Its subcellular location is the membrane. Aquaporins facilitate the transport of water and small neutral solutes across cell membranes. This chain is Aquaporin NIP3-1 (NIP3-1), found in Zea mays (Maize).